The sequence spans 290 residues: ATP synthase gamma chain (290 aa).

It belongs to the ATPase gamma chain family. F-type ATPases have 2 components, CF(1) - the catalytic core - and CF(0) - the membrane proton channel. CF(1) has five subunits: alpha(3), beta(3), gamma(1), delta(1), epsilon(1). CF(0) has three main subunits: a, b and c.

It is found in the cell membrane. Functionally, produces ATP from ADP in the presence of a proton gradient across the membrane. The gamma chain is believed to be important in regulating ATPase activity and the flow of protons through the CF(0) complex. The sequence is that of ATP synthase gamma chain from Heliobacterium modesticaldum (strain ATCC 51547 / Ice1).